The following is a 138-amino-acid chain: MSSAGGGGGRGKSKGSKSVSRSSKAGLQFPVGRIARYLKAGKYAERVGAGAPVYLSAVLEYLAAEVLELAGNAARDNKKNRIVPRHIQLAVRNDEELSRLLGAVTIAAGGVLPNIHQTLLPKKGGKDKADIGSASQEF.

A compositionally biased stretch (gly residues) spans 1 to 10; the sequence is MSSAGGGGGR. The tract at residues 1–24 is disordered; sequence MSSAGGGGGRGKSKGSKSVSRSSK. Ser-135 bears the Phosphoserine; by ATM and ATR mark. A [ST]-Q motif motif is present at residues 135–136; sequence SQ.

The protein belongs to the histone H2A family. The nucleosome is a histone octamer containing two molecules each of H2A, H2B, H3 and H4 assembled in one H3-H4 heterotetramer and two H2A-H2B heterodimers. The octamer wraps approximately 147 bp of DNA. Interacts with numerous proteins required for DNA damage signaling and repair when phosphorylated on Ser-135. In terms of processing, phosphorylated to form H2AXS139ph (gamma-H2AX) in response to DNA double strand breaks (DSBs) generated by exogenous genotoxic agents and by stalled replication forks, and may also occur during meiotic recombination events. Phosphorylation can extend up to several thousand nucleosomes from the actual site of the DSB and may mark the surrounding chromatin for recruitment of proteins required for DNA damage signaling and repair. Widespread phosphorylation may also serve to amplify the damage signal or aid repair of persistent lesions. H2AXS139ph in response to ionizing radiation is mediated by ATM while defects in DNA replication induce H2AXS139ph subsequent to activation of ATR. Dephosphorylation of H2AXS139ph by PP2A is required for DNA DSB repair.

The protein localises to the nucleus. It is found in the chromosome. In terms of biological role, variant histone H2A which replaces conventional H2A in a subset of nucleosomes. Nucleosomes wrap and compact DNA into chromatin, limiting DNA accessibility to the cellular machineries which require DNA as a template. Histones thereby play a central role in transcription regulation, DNA repair, DNA replication and chromosomal stability. DNA accessibility is regulated via a complex set of post-translational modifications of histones, also called histone code, and nucleosome remodeling. Required for checkpoint-mediated arrest of cell cycle progression in response to low doses of ionizing radiation and for efficient repair of DNA double strand breaks (DSBs) specifically when modified by C-terminal phosphorylation. The chain is Probable histone H2AXb from Oryza sativa subsp. indica (Rice).